The primary structure comprises 808 residues: DNA replication licensing factor MCM3 (808 aa).

Ala-2 is modified (N-acetylalanine). Phosphoserine is present on residues Ser-160 and Ser-275. An N6-acetyllysine modification is found at Lys-293. The MCM domain maps to 295-502; sequence IFDQLAKSLA…QDREISDHVL (208 aa). ADP is bound by residues Gln-353, Leu-393, Glu-394, Ala-395, and Ala-397. Positions 477–480 match the Arginine finger motif; sequence SRFD. Ala-523 contributes to the ATP binding site. At Ser-535 the chain carries Phosphoserine; by ATM. Position 547 is an N6-acetyllysine (Lys-547). A Phosphoserine modification is found at Ser-611. Positions 662 to 739 are disordered; that stretch reads KKRKKRSEDE…ETKESQKVEL (78 aa). ATP is bound at residue Arg-664. 2 positions are modified to phosphoserine: Ser-668 and Ser-672. 2 stretches are compositionally biased toward acidic residues: residues 670 to 681 and 704 to 717; these read DESETEDEEEKS and SYDPYDFSDTEEEM. Position 674 is a phosphothreonine (Thr-674). The residue at position 681 (Ser-681) is a Phosphoserine. A Phosphotyrosine modification is found at Tyr-708. Ser-711 carries the phosphoserine modification. Phosphothreonine occurs at positions 713, 722, and 725. Over residues 727-739 the composition is skewed to basic and acidic residues; the sequence is DSQETKESQKVEL. Phosphoserine is present on residues Ser-728 and Ser-734.

It belongs to the MCM family. As to quaternary structure, component of the MCM2-7 complex. The complex forms a toroidal hexameric ring with the proposed subunit order MCM2-MCM6-MCM4-MCM7-MCM3-MCM5. Component of the CMG helicase complex, a hexameric ring of related MCM2-7 subunits stabilized by CDC45 and the tetrameric GINS complex. Associated with the replication-specific DNA polymerase alpha. Interacts with MCMBP. Interacts with ANKRD17. Interacts with MCM3AP isoform MCM3AP; this interaction leads to MCM3 acetylation. Post-translationally, acetylated by MCM3AP. In terms of processing, O-glycosylated (O-GlcNAcylated), in a cell cycle-dependent manner.

It is found in the nucleus. The protein localises to the chromosome. The enzyme catalyses ATP + H2O = ADP + phosphate + H(+). Functionally, acts as a component of the MCM2-7 complex (MCM complex) which is the replicative helicase essential for 'once per cell cycle' DNA replication initiation and elongation in eukaryotic cells. Core component of CDC45-MCM-GINS (CMG) helicase, the molecular machine that unwinds template DNA during replication, and around which the replisome is built. The active ATPase sites in the MCM2-7 ring are formed through the interaction surfaces of two neighboring subunits such that a critical structure of a conserved arginine finger motif is provided in trans relative to the ATP-binding site of the Walker A box of the adjacent subunit. The six ATPase active sites, however, are likely to contribute differentially to the complex helicase activity. Required for the entry in S phase and for cell division. The protein is DNA replication licensing factor MCM3 of Homo sapiens (Human).